Here is a 291-residue protein sequence, read N- to C-terminus: Popeye domain-containing protein 3 (291 aa).

Residue Asn-4 is glycosylated (N-linked (GlcNAc...) asparagine). A run of 3 helical transmembrane segments spans residues 27 to 44, 48 to 70, and 77 to 99; these read GAIY…FMGG, FGLL…WAWV, and IFSW…AYQV.

This sequence belongs to the popeye family. As to expression, expressed in cardiac and skeletal muscle.

The protein resides in the membrane. Its function is as follows. May play a role in the maintenance of heart function mediated, at least in part, through cAMP-binding. May play a role in the regulation of KCNK2-mediated current amplitude. This chain is Popeye domain-containing protein 3 (Popdc3), found in Mus musculus (Mouse).